Reading from the N-terminus, the 339-residue chain is Ketol-acid reductoisomerase (NADP(+)) (339 aa).

The KARI N-terminal Rossmann domain occupies 1–182 (MRVYYDRDAD…GGGRAGIIET (182 aa)). NADP(+)-binding positions include 24-27 (YGSQ), Arg-48, Ser-51, Thr-53, and 83-86 (DELQ). His-108 is an active-site residue. Gly-134 is a binding site for NADP(+). Residues 183-328 (TFREECETDL…ARLREMMPWI (146 aa)) form the KARI C-terminal knotted domain. Asp-191, Glu-195, Glu-227, and Glu-231 together coordinate Mg(2+). Residue Ser-252 coordinates substrate.

Belongs to the ketol-acid reductoisomerase family. Mg(2+) serves as cofactor.

It carries out the reaction (2R)-2,3-dihydroxy-3-methylbutanoate + NADP(+) = (2S)-2-acetolactate + NADPH + H(+). The catalysed reaction is (2R,3R)-2,3-dihydroxy-3-methylpentanoate + NADP(+) = (S)-2-ethyl-2-hydroxy-3-oxobutanoate + NADPH + H(+). The protein operates within amino-acid biosynthesis; L-isoleucine biosynthesis; L-isoleucine from 2-oxobutanoate: step 2/4. Its pathway is amino-acid biosynthesis; L-valine biosynthesis; L-valine from pyruvate: step 2/4. In terms of biological role, involved in the biosynthesis of branched-chain amino acids (BCAA). Catalyzes an alkyl-migration followed by a ketol-acid reduction of (S)-2-acetolactate (S2AL) to yield (R)-2,3-dihydroxy-isovalerate. In the isomerase reaction, S2AL is rearranged via a Mg-dependent methyl migration to produce 3-hydroxy-3-methyl-2-ketobutyrate (HMKB). In the reductase reaction, this 2-ketoacid undergoes a metal-dependent reduction by NADPH to yield (R)-2,3-dihydroxy-isovalerate. The polypeptide is Ketol-acid reductoisomerase (NADP(+)) (Parvibaculum lavamentivorans (strain DS-1 / DSM 13023 / NCIMB 13966)).